Consider the following 256-residue polypeptide: Imidazole glycerol phosphate synthase subunit HisF (256 aa).

Active-site residues include aspartate 12 and aspartate 131.

The protein belongs to the HisA/HisF family. In terms of assembly, heterodimer of HisH and HisF.

The protein localises to the cytoplasm. The catalysed reaction is 5-[(5-phospho-1-deoxy-D-ribulos-1-ylimino)methylamino]-1-(5-phospho-beta-D-ribosyl)imidazole-4-carboxamide + L-glutamine = D-erythro-1-(imidazol-4-yl)glycerol 3-phosphate + 5-amino-1-(5-phospho-beta-D-ribosyl)imidazole-4-carboxamide + L-glutamate + H(+). Its pathway is amino-acid biosynthesis; L-histidine biosynthesis; L-histidine from 5-phospho-alpha-D-ribose 1-diphosphate: step 5/9. In terms of biological role, IGPS catalyzes the conversion of PRFAR and glutamine to IGP, AICAR and glutamate. The HisF subunit catalyzes the cyclization activity that produces IGP and AICAR from PRFAR using the ammonia provided by the HisH subunit. The chain is Imidazole glycerol phosphate synthase subunit HisF from Pseudomonas syringae pv. tomato (strain ATCC BAA-871 / DC3000).